A 642-amino-acid chain; its full sequence is Probable malate:quinone oxidoreductase (642 aa).

The interval 1–142 (MIVVFRHEST…TTRGDKRKLN (142 aa)) is unknown. The MQO domain stretch occupies residues 143–642 (MSDSPKNAQK…TQKTLKLEKA (500 aa)).

The protein in the C-terminal section; belongs to the MQO family. Requires FAD as cofactor.

The enzyme catalyses (S)-malate + a quinone = a quinol + oxaloacetate. It participates in carbohydrate metabolism; tricarboxylic acid cycle; oxaloacetate from (S)-malate (quinone route): step 1/1. In Corynebacterium efficiens (strain DSM 44549 / YS-314 / AJ 12310 / JCM 11189 / NBRC 100395), this protein is Probable malate:quinone oxidoreductase (mqo).